The chain runs to 133 residues: UPF0102 protein bll0669 (133 aa).

The protein belongs to the UPF0102 family.

This chain is UPF0102 protein bll0669, found in Bradyrhizobium diazoefficiens (strain JCM 10833 / BCRC 13528 / IAM 13628 / NBRC 14792 / USDA 110).